A 259-amino-acid chain; its full sequence is Phosphatidylinositol transfer protein 2 (259 aa).

The stretch at 231-259 forms a coiled coil; it reads LTIEDIRKIEEETKAELAKKLEENKAANK.

The protein belongs to the PtdIns transfer protein family. PI transfer class IIA subfamily.

It is found in the cytoplasm. Its subcellular location is the golgi apparatus. Catalyzes the transfer of PtdIns and phosphatidylcholine between membranes. The chain is Phosphatidylinositol transfer protein 2 (pitB) from Dictyostelium discoideum (Social amoeba).